The chain runs to 423 residues: Methanol:N,N-dimethyl-4-nitrosoaniline oxidoreductase (423 aa).

Belongs to the iron-containing alcohol dehydrogenase family. Homodecamer. Requires Mg(2+) as cofactor. Zn(2+) is required as a cofactor. The cofactor is NADPH.

It catalyses the reaction methanol + A = formaldehyde + AH2. Catalyzes the oxidation of methanol to yield formaldehyde. While the in vivo electron acceptor is not known, N,N-dimethyl-4-nitrosoaniline (NDMA) can serve this function in vitro and is reduced to 4-(hydroxylamino)-N,N-dimethylaniline. The sequence is that of Methanol:N,N-dimethyl-4-nitrosoaniline oxidoreductase (thcE) from Rhodococcus erythropolis (Arthrobacter picolinophilus).